The primary structure comprises 260 residues: Transcription factor MYB4 (260 aa).

2 HTH myb-type domains span residues 12-64 and 65-119; these read AVEV…LNYL and RPGI…SKRS. 2 consecutive DNA-binding regions (H-T-H motif) follow at residues 40 to 64 and 92 to 115; these read WRML…LNYL and WSII…NTHL.

Its subcellular location is the nucleus. Its function is as follows. Transcription activator involved in the spatiotemporal regulation of flavonoid biosynthesis specifically in the corms of Montbretia. Activates the promoters of enzymes involved in the biosynthesis of the flavonol myricetin and the flavonol-glycoside montbretin A (MbA). MbA is a potent inhibitor of human pancreatic alpha-amylase and is being developed as drug candidate to treat type-2 diabetes. This chain is Transcription factor MYB4, found in Crocosmia x crocosmiiflora (Montbretia).